The following is a 258-amino-acid chain: Tryptophan synthase alpha chain (258 aa).

Catalysis depends on proton acceptor residues Glu-47 and Asp-58.

The protein belongs to the TrpA family. Tetramer of two alpha and two beta chains.

The catalysed reaction is (1S,2R)-1-C-(indol-3-yl)glycerol 3-phosphate + L-serine = D-glyceraldehyde 3-phosphate + L-tryptophan + H2O. The protein operates within amino-acid biosynthesis; L-tryptophan biosynthesis; L-tryptophan from chorismate: step 5/5. Its function is as follows. The alpha subunit is responsible for the aldol cleavage of indoleglycerol phosphate to indole and glyceraldehyde 3-phosphate. This is Tryptophan synthase alpha chain from Bacillus thuringiensis subsp. konkukian (strain 97-27).